Consider the following 123-residue polypeptide: Small ribosomal subunit protein uS12 (123 aa).

Residues 1–21 (MPTIEQLVRKGRQAKPKKSKT) form a disordered region. Basic residues predominate over residues 9–20 (RKGRQAKPKKSK). Residue Asp-89 is modified to 3-methylthioaspartic acid.

It belongs to the universal ribosomal protein uS12 family. Part of the 30S ribosomal subunit. Contacts proteins S8 and S17. May interact with IF1 in the 30S initiation complex.

Functionally, with S4 and S5 plays an important role in translational accuracy. Its function is as follows. Interacts with and stabilizes bases of the 16S rRNA that are involved in tRNA selection in the A site and with the mRNA backbone. Located at the interface of the 30S and 50S subunits, it traverses the body of the 30S subunit contacting proteins on the other side and probably holding the rRNA structure together. The combined cluster of proteins S8, S12 and S17 appears to hold together the shoulder and platform of the 30S subunit. This chain is Small ribosomal subunit protein uS12, found in Bifidobacterium adolescentis (strain ATCC 15703 / DSM 20083 / NCTC 11814 / E194a).